The chain runs to 230 residues: MTALSETEHKGAFYGRRVGKTLRQGQQQALARTLPRYLIDLPTVAEPAALFPCPVDEIRLEIGFGGGEHLLSEAKRFPRAGYIGIEPFLNGMAKAVLELDLAPQENVRLFNLDAALLLARLPEGSVSQVELLYPDPWPKRRHWKRRFVRPDNLDLLARALKPGGVFRFASDVPDYVDWTLREVRAHPAFRWTQTRADDWRTPYEGWPGTRYEAKAIAAGRVPTYLSFARV.

Residues Glu-61, Glu-86, Asp-113, and Asp-135 each contribute to the S-adenosyl-L-methionine site. Residue Asp-135 is part of the active site. Substrate is bound by residues Lys-139, Asp-171, and 209 to 212 (TRYE).

Belongs to the class I-like SAM-binding methyltransferase superfamily. TrmB family.

It carries out the reaction guanosine(46) in tRNA + S-adenosyl-L-methionine = N(7)-methylguanosine(46) in tRNA + S-adenosyl-L-homocysteine. It functions in the pathway tRNA modification; N(7)-methylguanine-tRNA biosynthesis. In terms of biological role, catalyzes the formation of N(7)-methylguanine at position 46 (m7G46) in tRNA. The chain is tRNA (guanine-N(7)-)-methyltransferase from Azorhizobium caulinodans (strain ATCC 43989 / DSM 5975 / JCM 20966 / LMG 6465 / NBRC 14845 / NCIMB 13405 / ORS 571).